The primary structure comprises 45 residues: Large ribosomal subunit protein bL34 (45 aa).

This sequence belongs to the bacterial ribosomal protein bL34 family.

This chain is Large ribosomal subunit protein bL34, found in Kocuria rhizophila (strain ATCC 9341 / DSM 348 / NBRC 103217 / DC2201).